The primary structure comprises 713 residues: Protein argonaute (713 aa).

Residues 18–129 (EFIPKEVHFY…IKNIRKHKVV (112 aa)) are N-terminal domain. The PAZ domain maps to 164-257 (HLWDFVNRDK…FAPQFCNLVF (94 aa)). Positions 213-218 (HIIKYY) are binds 3'-end of gDNA. The mid domain stretch occupies residues 346–488 (DVPEIIRNKN…QIMGKLGIKY (143 aa)). The region spanning 426–699 (CFALIIGKEK…FVKALGKNWK (274 aa)) is the Piwi domain. 3 residues coordinate a divalent metal cation: Gln457, Gln479, and Lys483. A binds 5'-phosphorylated end of gDNA region spans residues 457–460 (QNIL). Residues Asp504, Glu541, and Asp570 contribute to the active site. Asp504 is a binding site for Mn(2+). Asp570 contributes to the Mn(2+) binding site. 2 binds 5'-phosphorylated end of gDNA regions span residues 625-632 (HKTPFGSN) and 678-679 (LR). Asp688 is a catalytic residue. 2 residues coordinate Mn(2+): Asp688 and Ile713.

It belongs to the argonaute family. Long pAgo subfamily. A divalent metal cation is required as a cofactor.

With respect to regulation, DNA cleavage is inhibited by EDTA. Functionally, a DNA-guided ssDNA endonuclease that may play a role in defense against invading genetic elements. Uses short ssDNA sequences as guides (gDNA) to bind complementary target strands, resulting in slicing of the target DNA (tDNA). Endonucleolytically cleaves tDNA (the gDNA indicates where to cleave); two major and two minor products are seen which correspond to cleavage sites between nucleotides 9/10, 10/11, 13/14, and 14/15 downstream of the target residue base-paired with the 5'-end of the gDNA. Efficient guide-dependent tDNA cleavage requires a minimal length of 15 bp and is maximal at 19 bp. Prefers gDNA with 5'-phosphorylated purines and 3'-pyrimidines; changing these bases alters the cleavage activity and patterns. Also has guide-independent activity on tDNA called 'chopping'. Probably a first round of guide-independent activity on an invading plasmid or virus would generate guide DNAs for subsequent, more efficient, guide-dependent degradation of invading nucleic acids. Has no activity on substrate with a mismatch at positions 10 and 11, on ssDNA or RNA, nor on DNA:RNA hybrids. Digests longer (750 bp) dsDNA as well as circular plasmid and naked genomic DNA, but not chromatin, in a guide DNA-independent manner. Addition of endogenous histone A3 protects DNA from cleavage, while cleavage is insensitive to methylation. When plasmid encoding active or mutated protein (Ala-541) is transformed into Sulfolobus acidocaldarius about 25-fold fewer transformants are found with active protein; reduced levels of plasmid are found in wild-type transformed cells. While S.acidocaldarius grows at a similar temperature to M.jannaschii (70 to 80 degrees Celsius) it has very different histone-like proteins, which presumably do not protect against MjAgo. Binds ssDNA, dsDNA and DNA-RNA hybrids; binding is most efficient with dsDNA. The protein is Protein argonaute of Methanocaldococcus jannaschii (strain ATCC 43067 / DSM 2661 / JAL-1 / JCM 10045 / NBRC 100440) (Methanococcus jannaschii).